The sequence spans 518 residues: PTS system mannitol-specific EIICB component (518 aa).

The Cytoplasmic portion of the chain corresponds to M1–N31. Residues F20–D352 form the PTS EIIC type-2 domain. A helical membrane pass occupies residues I32 to N53. Over K54–A57 the chain is Extracellular. The helical transmembrane segment at Q58–R78 threads the bilayer. At L79 to F142 the chain is on the cytoplasmic side. A helical membrane pass occupies residues S143–K164. The Extracellular segment spans residues F165–G173. The chain crosses the membrane as a helical span at residues V174 to K194. At I195–S281 the chain is on the cytoplasmic side. A helical membrane pass occupies residues V282 to K301. Over T302 to F321 the chain is Extracellular. A helical membrane pass occupies residues L322–L343. Residues K344–D518 are Cytoplasmic-facing. A disordered region spans residues S369–D406. Positions S375–T387 are enriched in basic and acidic residues. Residues A388 to N398 show a composition bias toward low complexity. The region spanning D426–D518 is the PTS EIIB type-2 domain. Catalysis depends on C432, which acts as the Phosphocysteine intermediate. At C432 the chain carries Phosphocysteine; by EIIA.

In terms of assembly, homodimer.

It is found in the cell membrane. The catalysed reaction is D-mannitol(out) + N(pros)-phospho-L-histidyl-[protein] = D-mannitol 1-phosphate(in) + L-histidyl-[protein]. Functionally, the phosphoenolpyruvate-dependent sugar phosphotransferase system (sugar PTS), a major carbohydrate active transport system, catalyzes the phosphorylation of incoming sugar substrates concomitantly with their translocation across the cell membrane. The enzyme II CmtAB PTS system is involved in D-mannitol transport. The protein is PTS system mannitol-specific EIICB component of Staphylococcus carnosus.